A 293-amino-acid polypeptide reads, in one-letter code: Formamidopyrimidine-DNA glycosylase (293 aa).

Pro2 functions as the Schiff-base intermediate with DNA in the catalytic mechanism. Glu3 (proton donor) is an active-site residue. Lys58 acts as the Proton donor; for beta-elimination activity in catalysis. His104, Arg123, and Arg166 together coordinate DNA. An FPG-type zinc finger spans residues 257–293 (AVYDREGEPCRSKGCDGVVKRFVQNGRSTFWCPKCQK). Residue Arg283 is the Proton donor; for delta-elimination activity of the active site.

It belongs to the FPG family. As to quaternary structure, monomer. Zn(2+) is required as a cofactor.

It carries out the reaction Hydrolysis of DNA containing ring-opened 7-methylguanine residues, releasing 2,6-diamino-4-hydroxy-5-(N-methyl)formamidopyrimidine.. It catalyses the reaction 2'-deoxyribonucleotide-(2'-deoxyribose 5'-phosphate)-2'-deoxyribonucleotide-DNA = a 3'-end 2'-deoxyribonucleotide-(2,3-dehydro-2,3-deoxyribose 5'-phosphate)-DNA + a 5'-end 5'-phospho-2'-deoxyribonucleoside-DNA + H(+). Involved in base excision repair of DNA damaged by oxidation or by mutagenic agents. Acts as a DNA glycosylase that recognizes and removes damaged bases. Has a preference for oxidized purines, such as 7,8-dihydro-8-oxoguanine (8-oxoG). Has AP (apurinic/apyrimidinic) lyase activity and introduces nicks in the DNA strand. Cleaves the DNA backbone by beta-delta elimination to generate a single-strand break at the site of the removed base with both 3'- and 5'-phosphates. This is Formamidopyrimidine-DNA glycosylase from Rhodopseudomonas palustris (strain BisB18).